The primary structure comprises 122 residues: MIQTQTYLNVSDNSGAKKIMCISIISTKRKYAKIGDTIIAVVKKASPNKIIKKSMIVKALIIRTTKPLYRKHNNMYISFNENAAIIINTDNTLKGTNIFGPVPRELMNIGFTNLNSTAKLII.

The protein belongs to the universal ribosomal protein uL14 family. In terms of assembly, part of the 50S ribosomal subunit.

It localises to the plastid. Functionally, binds to 23S rRNA. The chain is Large ribosomal subunit protein uL14c from Euglena longa (Euglenophycean alga).